A 142-amino-acid chain; its full sequence is Dynein light chain Tctex-type protein 2B (142 aa).

The protein belongs to the dynein light chain Tctex-type family. Light chain of the cytoplasmic dynein complex 2, a multisubunit complex composed at least of eleven different proteins. The cytoplasmic dynein 2 complex consists of two catalytic heavy chains (HCs) and a number of non-catalytic subunits presented by intermediate chains (ICs), light intermediate chains (LICs) and light chains (LCs). Among them, a heavy chain (DYNC2H1), two intermediate chains (DYNC2I2 and DYNC2I1), a light intermediate chain (DYNC2LI1), and a light chain (DYNLT2B) are unique to the dynein-2 complex, but a subset of the light chains are also shared by dynein-1 and dynein-2 complexes. Interacts with DYNC2I1. The dimer DYNLT2B-DYNLT1/DYNLT3 interacts with DYNC2I1; this interaction is crucial for retrograde trafficking of ciliary proteins.

Its subcellular location is the dynein axonemal particle. In terms of biological role, acts as one of several non-catalytic accessory components of the cytoplasmic dynein 2 complex (dynein-2 complex), a motor protein complex that drives the movement of cargos along microtubules within cilia and flagella in concert with the intraflagellar transport (IFT) system. Required for proper retrograde ciliary transport. In Homo sapiens (Human), this protein is Dynein light chain Tctex-type protein 2B.